We begin with the raw amino-acid sequence, 295 residues long: Shikimate dehydrogenase (NADP(+)) (295 aa).

Shikimate-binding positions include 20–22 (SWS) and Thr68. The active-site Proton acceptor is Lys72. Positions 93 and 108 each coordinate shikimate. Residues 132–136 (GNGGA) and Met234 each bind NADP(+). Residue Tyr236 participates in shikimate binding. An NADP(+)-binding site is contributed by Gly257.

The protein belongs to the shikimate dehydrogenase family. In terms of assembly, homodimer.

The catalysed reaction is shikimate + NADP(+) = 3-dehydroshikimate + NADPH + H(+). It functions in the pathway metabolic intermediate biosynthesis; chorismate biosynthesis; chorismate from D-erythrose 4-phosphate and phosphoenolpyruvate: step 4/7. Functionally, involved in the biosynthesis of the chorismate, which leads to the biosynthesis of aromatic amino acids. Catalyzes the reversible NADPH linked reduction of 3-dehydroshikimate (DHSA) to yield shikimate (SA). This Chlorobaculum tepidum (strain ATCC 49652 / DSM 12025 / NBRC 103806 / TLS) (Chlorobium tepidum) protein is Shikimate dehydrogenase (NADP(+)).